Consider the following 60-residue polypeptide: LKCNKLIPIAYKTCPEGKNLCYKMMLASKKMVPVKRGCINVCPKNSALVKYVCCSTDRCN.

4 disulfides stabilise this stretch: cysteine 3-cysteine 21, cysteine 14-cysteine 38, cysteine 42-cysteine 53, and cysteine 54-cysteine 59.

This sequence belongs to the three-finger toxin family. Short-chain subfamily. Type IA cytotoxin sub-subfamily. As to quaternary structure, monomer in solution; Homodimer and oligomer in the presence of negatively charged lipids forming a pore with a size ranging between 20 and 30 Angstroms. Expressed by the venom gland.

Its subcellular location is the secreted. It localises to the target cell membrane. Its function is as follows. Shows cytolytic activity on many different cells by forming pore in lipid membranes. In vivo, increases heart rate or kills the animal by cardiac arrest. In addition, it binds to heparin with high affinity, interacts with Kv channel-interacting protein 1 (KCNIP1) in a calcium-independent manner, and binds to integrin alpha-V/beta-3 (ITGAV/ITGB3) with moderate affinity. This is Cytotoxin 4 from Naja mossambica (Mozambique spitting cobra).